Here is an 831-residue protein sequence, read N- to C-terminus: AMP deaminase (831 aa).

3 disordered regions span residues 26 to 45 (NPGANRDEEVAAAPSSQDTP), 66 to 110 (NGTQ…KLLN), and 130 to 149 (NAVVSSVGGPETDPGNMETT). Ser79 and Ser84 each carry phosphoserine. Residues His319 and His321 each coordinate Zn(2+). Residues His321 and 390–395 (KFNLKY) contribute to the substrate site. A Zn(2+)-binding site is contributed by His587. Glu590 is a substrate binding site. The active-site Proton acceptor is His609. Residue Asp664 coordinates Zn(2+). 665–668 (DPLQ) serves as a coordination point for substrate. Phosphoserine is present on residues Ser758, Ser776, Ser780, and Ser782.

This sequence belongs to the metallo-dependent hydrolases superfamily. Adenosine and AMP deaminases family. As to quaternary structure, homotetramer. Requires Zn(2+) as cofactor.

The protein localises to the cytoplasm. The enzyme catalyses AMP + H2O + H(+) = IMP + NH4(+). It functions in the pathway purine metabolism; IMP biosynthesis via salvage pathway; IMP from AMP: step 1/1. Its function is as follows. AMP deaminase plays a critical role in energy metabolism. The sequence is that of AMP deaminase (ada1) from Schizosaccharomyces pombe (strain 972 / ATCC 24843) (Fission yeast).